The sequence spans 201 residues: Two-component response regulator ORR9 (201 aa).

The region spanning 10–142 (HVLAVDDSLP…DMSKLKPHIL (133 aa)) is the Response regulatory domain. Aspartate 75 carries the post-translational modification 4-aspartylphosphate. The tract at residues 149–201 (HYQQEQNLQSNSESNNSSNPTSENSSSSTSSNSHKRKAVDEEILPHTIRPRHS) is disordered. The span at 158 to 180 (SNSESNNSSNPTSENSSSSTSSN) shows a compositional bias: low complexity.

Belongs to the ARR family. Type-A subfamily. Two-component system major event consists of a His-to-Asp phosphorelay between a sensor histidine kinase (HK) and a response regulator (RR). In plants, the His-to-Asp phosphorelay involves an additional intermediate named Histidine-containing phosphotransfer protein (HPt). This multistep phosphorelay consists of a His-Asp-His-Asp sequential transfer of a phosphate group between first a His and an Asp of the HK protein, followed by the transfer to a conserved His of the HPt protein and finally the transfer to an Asp in the receiver domain of the RR protein.

Functionally, functions as a response regulator involved in His-to-Asp phosphorelay signal transduction system. Phosphorylation of the Asp residue in the receiver domain activates the ability of the protein to promote the transcription of target genes. Type-A response regulators seem to act as negative regulators of the cytokinin signaling. This is Two-component response regulator ORR9 from Oryza sativa subsp. japonica (Rice).